A 99-amino-acid polypeptide reads, in one-letter code: Aspartyl/glutamyl-tRNA(Asn/Gln) amidotransferase subunit C (99 aa).

It belongs to the GatC family. In terms of assembly, heterotrimer of A, B and C subunits.

The enzyme catalyses L-glutamyl-tRNA(Gln) + L-glutamine + ATP + H2O = L-glutaminyl-tRNA(Gln) + L-glutamate + ADP + phosphate + H(+). It carries out the reaction L-aspartyl-tRNA(Asn) + L-glutamine + ATP + H2O = L-asparaginyl-tRNA(Asn) + L-glutamate + ADP + phosphate + 2 H(+). Its function is as follows. Allows the formation of correctly charged Asn-tRNA(Asn) or Gln-tRNA(Gln) through the transamidation of misacylated Asp-tRNA(Asn) or Glu-tRNA(Gln) in organisms which lack either or both of asparaginyl-tRNA or glutaminyl-tRNA synthetases. The reaction takes place in the presence of glutamine and ATP through an activated phospho-Asp-tRNA(Asn) or phospho-Glu-tRNA(Gln). The protein is Aspartyl/glutamyl-tRNA(Asn/Gln) amidotransferase subunit C of Burkholderia vietnamiensis (strain G4 / LMG 22486) (Burkholderia cepacia (strain R1808)).